The sequence spans 155 residues: Ribosomal RNA large subunit methyltransferase H (155 aa).

S-adenosyl-L-methionine is bound by residues leucine 72, glycine 103, and 122–127; that span reads FGRMVW.

The protein belongs to the RNA methyltransferase RlmH family. In terms of assembly, homodimer.

The protein resides in the cytoplasm. It carries out the reaction pseudouridine(1915) in 23S rRNA + S-adenosyl-L-methionine = N(3)-methylpseudouridine(1915) in 23S rRNA + S-adenosyl-L-homocysteine + H(+). In terms of biological role, specifically methylates the pseudouridine at position 1915 (m3Psi1915) in 23S rRNA. The protein is Ribosomal RNA large subunit methyltransferase H of Paracoccus denitrificans (strain Pd 1222).